The following is a 341-amino-acid chain: UDP-N-acetylenolpyruvoylglucosamine reductase (341 aa).

The FAD-binding PCMH-type domain occupies 13 to 185 (FGVEQSCLSM…TAVGLRLPKA (173 aa)). Arginine 161 is a catalytic residue. The active-site Proton donor is serine 231. Residue glutamate 327 is part of the active site.

This sequence belongs to the MurB family. Requires FAD as cofactor.

The protein localises to the cytoplasm. It carries out the reaction UDP-N-acetyl-alpha-D-muramate + NADP(+) = UDP-N-acetyl-3-O-(1-carboxyvinyl)-alpha-D-glucosamine + NADPH + H(+). It participates in cell wall biogenesis; peptidoglycan biosynthesis. In terms of biological role, cell wall formation. The chain is UDP-N-acetylenolpyruvoylglucosamine reductase from Shewanella sp. (strain MR-7).